Here is a 121-residue protein sequence, read N- to C-terminus: Holo-[acyl-carrier-protein] synthase (121 aa).

Positions 6 and 55 each coordinate Mg(2+).

The protein belongs to the P-Pant transferase superfamily. AcpS family. Mg(2+) is required as a cofactor.

Its subcellular location is the cytoplasm. It catalyses the reaction apo-[ACP] + CoA = holo-[ACP] + adenosine 3',5'-bisphosphate + H(+). Transfers the 4'-phosphopantetheine moiety from coenzyme A to a Ser of acyl-carrier-protein. The polypeptide is Holo-[acyl-carrier-protein] synthase (Chloroherpeton thalassium (strain ATCC 35110 / GB-78)).